A 22-amino-acid chain; its full sequence is Hemoglobinase-like protein 2 (22 aa).

This sequence belongs to the peptidase C13 family.

It carries out the reaction Hydrolysis of proteins and small molecule substrates at -Asn-|-Xaa- bonds.. The chain is Hemoglobinase-like protein 2 from Fasciola hepatica (Liver fluke).